Here is a 317-residue protein sequence, read N- to C-terminus: Lipoyl synthase (317 aa).

The [4Fe-4S] cluster site is built by cysteine 55, cysteine 60, cysteine 66, cysteine 81, cysteine 85, cysteine 88, and serine 292. One can recognise a Radical SAM core domain in the interval 67–281 (WEDREATFLI…ERYATEIGFA (215 aa)).

It belongs to the radical SAM superfamily. Lipoyl synthase family. It depends on [4Fe-4S] cluster as a cofactor.

The protein resides in the cytoplasm. The catalysed reaction is [[Fe-S] cluster scaffold protein carrying a second [4Fe-4S](2+) cluster] + N(6)-octanoyl-L-lysyl-[protein] + 2 oxidized [2Fe-2S]-[ferredoxin] + 2 S-adenosyl-L-methionine + 4 H(+) = [[Fe-S] cluster scaffold protein] + N(6)-[(R)-dihydrolipoyl]-L-lysyl-[protein] + 4 Fe(3+) + 2 hydrogen sulfide + 2 5'-deoxyadenosine + 2 L-methionine + 2 reduced [2Fe-2S]-[ferredoxin]. It functions in the pathway protein modification; protein lipoylation via endogenous pathway; protein N(6)-(lipoyl)lysine from octanoyl-[acyl-carrier-protein]: step 2/2. In terms of biological role, catalyzes the radical-mediated insertion of two sulfur atoms into the C-6 and C-8 positions of the octanoyl moiety bound to the lipoyl domains of lipoate-dependent enzymes, thereby converting the octanoylated domains into lipoylated derivatives. This is Lipoyl synthase from Mycolicibacterium gilvum (strain PYR-GCK) (Mycobacterium gilvum (strain PYR-GCK)).